A 255-amino-acid polypeptide reads, in one-letter code: Acetylglutamate kinase (255 aa).

Substrate is bound by residues Gly40–Gly41, Arg62, and Asn153.

It belongs to the acetylglutamate kinase family. ArgB subfamily.

It localises to the cytoplasm. The catalysed reaction is N-acetyl-L-glutamate + ATP = N-acetyl-L-glutamyl 5-phosphate + ADP. The protein operates within amino-acid biosynthesis; L-arginine biosynthesis; N(2)-acetyl-L-ornithine from L-glutamate: step 2/4. Its function is as follows. Catalyzes the ATP-dependent phosphorylation of N-acetyl-L-glutamate. This is Acetylglutamate kinase from Bacillus cereus (strain G9842).